Reading from the N-terminus, the 691-residue chain is NADH-ubiquinone oxidoreductase 75 kDa subunit (691 aa).

The region spanning 1–78 (MVNVFVDGLS…NMKIFTNTPL (78 aa)) is the 2Fe-2S ferredoxin-type domain. Cysteine 34, cysteine 45, cysteine 48, and cysteine 62 together coordinate [2Fe-2S] cluster. The 40-residue stretch at 78 to 117 (LVKKAREGVLEFLLVNHPLDCPICDQGGECDLQDLTMVYG) folds into the 4Fe-4S His(Cys)3-ligated-type domain. 8 residues coordinate [4Fe-4S] cluster: histidine 94, cysteine 98, cysteine 101, cysteine 107, cysteine 146, cysteine 149, cysteine 152, and cysteine 196. In terms of domain architecture, 4Fe-4S Mo/W bis-MGD-type spans 215-271 (LQSTESIDVSDAIGSNIRIDVRGSEIMRILPRLNEDVNEEWISDKARFCYDGLKRQR).

This sequence belongs to the complex I 75 kDa subunit family. In terms of assembly, complex I is composed of about 30 different subunits. [2Fe-2S] cluster is required as a cofactor. [4Fe-4S] cluster serves as cofactor.

The protein localises to the mitochondrion inner membrane. It carries out the reaction a ubiquinone + NADH + 5 H(+)(in) = a ubiquinol + NAD(+) + 4 H(+)(out). Core subunit of the mitochondrial membrane respiratory chain NADH dehydrogenase (Complex I) that is believed to belong to the minimal assembly required for catalysis. Complex I functions in the transfer of electrons from NADH to the respiratory chain. The immediate electron acceptor for the enzyme is believed to be ubiquinone. This is the largest subunit of complex I and it is a component of the iron-sulfur (IP) fragment of the enzyme. It may form part of the active site crevice where NADH is oxidized. The sequence is that of NADH-ubiquinone oxidoreductase 75 kDa subunit (NAD11) from Reclinomonas americana.